A 198-amino-acid polypeptide reads, in one-letter code: V-type ATP synthase subunit E (198 aa).

The protein belongs to the V-ATPase E subunit family.

Functionally, produces ATP from ADP in the presence of a proton gradient across the membrane. This is V-type ATP synthase subunit E from Acetivibrio thermocellus (strain ATCC 27405 / DSM 1237 / JCM 9322 / NBRC 103400 / NCIMB 10682 / NRRL B-4536 / VPI 7372) (Clostridium thermocellum).